The chain runs to 317 residues: MKKLVIATRGSKLALWQAEHVKSCIEGQHPGVSVELLVLKTRGDIILDVPLAKVGGKGLFVKEIEEALLDGRADLAVHSMKDVPMELPEGLVLGIIPEREEPSDTFLSVHHDSLAALPHGATVGTSSLRRQSQLLALRPDLNVVSLRGNVDTRLRKLSEGQFDAIIMATAGMKRLGLSAPRSEVLGPPAFLPAVGQGALGIEFRADRADLHELLAFMEHTPTRIRVEAERGFLAGLQGGCQVPIAGHAVMTGDGTFALEGLVADLTGARVIRRTMNGVSAPDGAQARQIGLDLAAQLVADGAGEILAEVYGSGEAVN.

The residue at position 240 (C240) is an S-(dipyrrolylmethanemethyl)cysteine.

The protein belongs to the HMBS family. As to quaternary structure, monomer. Dipyrromethane serves as cofactor.

The enzyme catalyses 4 porphobilinogen + H2O = hydroxymethylbilane + 4 NH4(+). Its pathway is porphyrin-containing compound metabolism; protoporphyrin-IX biosynthesis; coproporphyrinogen-III from 5-aminolevulinate: step 2/4. Tetrapolymerization of the monopyrrole PBG into the hydroxymethylbilane pre-uroporphyrinogen in several discrete steps. The polypeptide is Porphobilinogen deaminase (Nitratidesulfovibrio vulgaris (strain DSM 19637 / Miyazaki F) (Desulfovibrio vulgaris)).